The chain runs to 199 residues: Recombination protein RecR (199 aa).

The C4-type zinc-finger motif lies at 57–72; the sequence is CSICGNFTDRDPCRLC. The Toprim domain maps to 80-175; that stretch reads SCICVVEEAR…KVTRLAYGLP (96 aa).

This sequence belongs to the RecR family.

Functionally, may play a role in DNA repair. It seems to be involved in an RecBC-independent recombinational process of DNA repair. It may act with RecF and RecO. This chain is Recombination protein RecR, found in Moorella thermoacetica (strain ATCC 39073 / JCM 9320).